Reading from the N-terminus, the 299-residue chain is MKVLCTVLVVTLLAGCQADVQPEPEALEPAVRKSDQPWELALGRFWDYLRWVQTLSDQVQEELLSSQVTQELTVLMEDTMKAVKAYKSELEQELVPMAEDTKARLSKELQAAQARLGADMEEVRNRLAQYRSEMQAMLGQSAEELRARLASHLRKLRKKLLRDAEDLQKRLAVYKDGASEGAERSVSAVRERLESLVEQSRARAALTSQPLQERAQAWGKRLRGRLEEVGSQARDRLEEVREQMEEVRVKMEEQAEAFQARLKGWFEPMVEDMRRQWADLIEKVQAAVGASTPTPSQKP.

Residues 1-18 (MKVLCTVLVVTLLAGCQA) form the signal peptide. The 8 X 22 AA approximate tandem repeats stretch occupies residues 74-245 (VLMEDTMKAV…RLEEVREQME (172 aa)). 8 consecutive repeat copies span residues 75-95 (LMED…QELV), 96-117 (PMAE…ARLG), 118-139 (ADME…AMLG), 140-161 (QSAE…KKLL), 162-183 (RDAE…EGAE), 184-206 (RSVS…RAAL), 207-225 (TSQP…LRGR), and 224-242 (GRLE…EVRE). Met137 is modified (methionine sulfoxide). Residue Ser141 is modified to Phosphoserine. The segment at 152-162 (HLRKLRKKLLR) is LDL and other lipoprotein receptors binding. 156-159 (LRKK) is a binding site for heparin. The interval 205 to 273 (ALTSQPLQER…GWFEPMVEDM (69 aa)) is lipid-binding and lipoprotein association. 219–226 (GKRLRGRL) provides a ligand contact to heparin. Positions 261 to 273 (RLKGWFEPMVEDM) are specificity for association with VLDL.

This sequence belongs to the apolipoprotein A1/A4/E family. In terms of assembly, homotetramer. May interact with ABCA1; functionally associated with ABCA1 in the biogenesis of HDLs. May interact with APP/A4 amyloid-beta peptide; the interaction is extremely stable in vitro but its physiological significance is unclear. May interact with MAPT. May interact with MAP2. In the cerebrospinal fluid, interacts with secreted SORL1. Interacts with PMEL; this allows the loading of PMEL luminal fragment on ILVs to induce fibril nucleation. APOE exists as multiple glycosylated and sialylated glycoforms within cells and in plasma. The extent of glycosylation and sialylation are tissue and context specific. In terms of processing, glycated in plasma VLDL. Post-translationally, phosphorylated by FAM20C in the extracellular medium.

The protein resides in the secreted. It localises to the extracellular space. Its subcellular location is the extracellular matrix. The protein localises to the extracellular vesicle. It is found in the endosome. The protein resides in the multivesicular body. Its function is as follows. APOE is an apolipoprotein, a protein associating with lipid particles, that mainly functions in lipoprotein-mediated lipid transport between organs via the plasma and interstitial fluids. APOE is a core component of plasma lipoproteins and is involved in their production, conversion and clearance. Apolipoproteins are amphipathic molecules that interact both with lipids of the lipoprotein particle core and the aqueous environment of the plasma. As such, APOE associates with chylomicrons, chylomicron remnants, very low density lipoproteins (VLDL) and intermediate density lipoproteins (IDL) but shows a preferential binding to high-density lipoproteins (HDL). It also binds a wide range of cellular receptors including the LDL receptor/LDLR, the LDL receptor-related proteins LRP1, LRP2 and LRP8 and the very low-density lipoprotein receptor/VLDLR that mediate the cellular uptake of the APOE-containing lipoprotein particles. Finally, APOE also has a heparin-binding activity and binds heparan-sulfate proteoglycans on the surface of cells, a property that supports the capture and the receptor-mediated uptake of APOE-containing lipoproteins by cells. A main function of APOE is to mediate lipoprotein clearance through the uptake of chylomicrons, VLDLs, and HDLs by hepatocytes. APOE is also involved in the biosynthesis by the liver of VLDLs as well as their uptake by peripheral tissues ensuring the delivery of triglycerides and energy storage in muscle, heart and adipose tissues. By participating in the lipoprotein-mediated distribution of lipids among tissues, APOE plays a critical role in plasma and tissues lipid homeostasis. APOE is also involved in two steps of reverse cholesterol transport, the HDLs-mediated transport of cholesterol from peripheral tissues to the liver, and thereby plays an important role in cholesterol homeostasis. First, it is functionally associated with ABCA1 in the biogenesis of HDLs in tissues. Second, it is enriched in circulating HDLs and mediates their uptake by hepatocytes. APOE also plays an important role in lipid transport in the central nervous system, regulating neuron survival and sprouting. This is Apolipoprotein E (APOE) from Ctenomys sociabilis (Social tuco-tuco).